The sequence spans 241 residues: Pre-rRNA-processing protein pno1 (241 aa).

The disordered stretch occupies residues 48–71 (APAKTSAEKKRGAKPQMRRVPIPP). Thr52 bears the Phosphothreonine mark. Residues 162-214 (GDHLSRAIGRIAGQGGKTKFAIENASRTRIVLADSKIHILGGFTNIRIAKDAV) form the KH domain.

This sequence belongs to the PNO1 family. Component of the small ribosomal subunit, ribosomal RNA processing complex (SSU RRP complex).

The protein localises to the cytoplasm. Its subcellular location is the nucleus. It localises to the nucleolus. Required for small ribosomal subunit (SSU) synthesis. Has a role in the processing of early nucleolar and late cytoplasmic pre-RNA species. The protein is Pre-rRNA-processing protein pno1 (rbp28) of Schizosaccharomyces pombe (strain 972 / ATCC 24843) (Fission yeast).